Here is a 285-residue protein sequence, read N- to C-terminus: Glutamate racemase (285 aa).

Residues 28–29 (DS) and 60–61 (YG) contribute to the substrate site. The active-site Proton donor/acceptor is Cys-92. Residue 93 to 94 (NT) participates in substrate binding. The active-site Proton donor/acceptor is the Cys-204. 205–206 (TH) contributes to the substrate binding site.

The protein belongs to the aspartate/glutamate racemases family.

It catalyses the reaction L-glutamate = D-glutamate. It functions in the pathway cell wall biogenesis; peptidoglycan biosynthesis. Functionally, provides the (R)-glutamate required for cell wall biosynthesis. The sequence is that of Glutamate racemase from Escherichia fergusonii (strain ATCC 35469 / DSM 13698 / CCUG 18766 / IAM 14443 / JCM 21226 / LMG 7866 / NBRC 102419 / NCTC 12128 / CDC 0568-73).